A 108-amino-acid chain; its full sequence is Protein FATTY ACID EXPORT 7 (108 aa).

A run of 3 helical transmembrane segments spans residues 32-52, 55-75, and 85-105; these read ISLV…TELP, PVLA…MMGS, and PAGL…HGLI.

This sequence belongs to the TMEM14 family.

It is found in the membrane. May be involved in free fatty acids export. In Arabidopsis thaliana (Mouse-ear cress), this protein is Protein FATTY ACID EXPORT 7.